Here is a 502-residue protein sequence, read N- to C-terminus: ATP synthase subunit alpha (502 aa).

Residues 119-139 (GPIATTKSRPIESPAPGVMDR) form a disordered region. Residue 169-176 (GDRQTGKT) participates in ATP binding.

This sequence belongs to the ATPase alpha/beta chains family. As to quaternary structure, F-type ATPases have 2 components, CF(1) - the catalytic core - and CF(0) - the membrane proton channel. CF(1) has five subunits: alpha(3), beta(3), gamma(1), delta(1), epsilon(1). CF(0) has three main subunits: a(1), b(2) and c(9-12). The alpha and beta chains form an alternating ring which encloses part of the gamma chain. CF(1) is attached to CF(0) by a central stalk formed by the gamma and epsilon chains, while a peripheral stalk is formed by the delta and b chains.

The protein localises to the cell membrane. The enzyme catalyses ATP + H2O + 4 H(+)(in) = ADP + phosphate + 5 H(+)(out). Functionally, produces ATP from ADP in the presence of a proton gradient across the membrane. The alpha chain is a regulatory subunit. This chain is ATP synthase subunit alpha, found in Alkalihalophilus pseudofirmus (strain ATCC BAA-2126 / JCM 17055 / OF4) (Bacillus pseudofirmus).